The following is a 123-amino-acid chain: RxLR effector protein Avh262 (123 aa).

The N-terminal stretch at 1-18 (MLPVAVVLVVFAVAVTSA) is a signal peptide. The disordered stretch occupies residues 24 to 46 (VNPLPRRRRLKGTEEKGHHTNVN). A RxLR-dEER motif is present at residues 30 to 50 (RRRLKGTEEKGHHTNVNDEER). Positions 34–46 (KGTEEKGHHTNVN) are enriched in basic and acidic residues. The segment at 60 to 82 (LISKLKVKINAKLLAGDSAKPAT) is biP-binding.

Belongs to the RxLR effector family. In terms of assembly, interacts with host plant ER-luminal binding immunoglobulin proteins (BiPs) such as soybean BiP1, BiP2, BiP3 and BiP4.

The protein resides in the secreted. It localises to the host endoplasmic reticulum. In terms of biological role, effector that suppresses plant defense responses during the early stages of pathogen infection. Suppresses cell death induced by effectors and PAMPs in plant hosts. Avh262 stabilizes endoplasmic reticulum (ER)-luminal binding immunoglobulin proteins (BiPs), which act as negative regulators of plant resistance to Phytophthora. By stabilizing BiPs, Avh262 suppresses ER stress-triggered cell death and facilitates Phytophthora infection. The chain is RxLR effector protein Avh262 from Phytophthora sojae (Soybean stem and root rot agent).